Here is a 122-residue protein sequence, read N- to C-terminus: Piercer of microtubule wall 2 protein (122 aa).

The span at 1–23 (MARETDCDLDKKTSLTSDAEMRP) shows a compositional bias: basic and acidic residues. Disordered stretches follow at residues 1-26 (MARE…PEPP) and 99-122 (QNNS…QHTL). Over residues 113–122 (IDSPNYQHTL) the composition is skewed to polar residues.

The protein belongs to the PIERCE2 family. Microtubule inner protein component of sperm flagellar doublet microtubules. Interacts with CFAP53, ODAD1 and ODAD3; the interactions link the outer dynein arms docking complex (ODA-DC) to the internal microtubule inner proteins (MIP) in cilium axoneme.

The protein localises to the cytoplasm. The protein resides in the cytoskeleton. It localises to the cilium axoneme. It is found in the flagellum axoneme. Microtubule inner protein involved in the attachment of outer dynein arms (ODAs) to dynein-decorated doublet microtubules (DMTs) in cilia axoneme, which is required for motile cilia beating. In Mus musculus (Mouse), this protein is Piercer of microtubule wall 2 protein.